The following is a 574-amino-acid chain: Serine carboxypeptidase ctsa-3.1 (574 aa).

The N-terminal stretch at 1-19 (MCRTLLGVAFLVVTVLSQG) is a signal peptide. Asn48 and Asn163 each carry an N-linked (GlcNAc...) asparagine glycan. Residue Ser172 is part of the active site. Asn241, Asn408, Asn414, and Asn426 each carry an N-linked (GlcNAc...) asparagine glycan. Active-site residues include Asp441 and His507. A glycan (N-linked (GlcNAc...) asparagine) is linked at Asn534.

The protein belongs to the peptidase S10 family.

The sequence is that of Serine carboxypeptidase ctsa-3.1 from Caenorhabditis elegans.